The following is a 307-amino-acid chain: Glycine--tRNA ligase alpha subunit (307 aa).

It belongs to the class-II aminoacyl-tRNA synthetase family. In terms of assembly, tetramer of two alpha and two beta subunits.

It localises to the cytoplasm. The enzyme catalyses tRNA(Gly) + glycine + ATP = glycyl-tRNA(Gly) + AMP + diphosphate. This chain is Glycine--tRNA ligase alpha subunit, found in Xylella fastidiosa (strain M23).